The following is a 314-amino-acid chain: Aspartate carbamoyltransferase catalytic subunit (314 aa).

Arg58 and Thr59 together coordinate carbamoyl phosphate. L-aspartate is bound at residue Lys86. The carbamoyl phosphate site is built by Arg108, His136, and Gln139. Arg169 and Arg223 together coordinate L-aspartate. The carbamoyl phosphate site is built by Gly264 and Pro265.

Belongs to the aspartate/ornithine carbamoyltransferase superfamily. ATCase family. In terms of assembly, heterododecamer (2C3:3R2) of six catalytic PyrB chains organized as two trimers (C3), and six regulatory PyrI chains organized as three dimers (R2).

It catalyses the reaction carbamoyl phosphate + L-aspartate = N-carbamoyl-L-aspartate + phosphate + H(+). Its pathway is pyrimidine metabolism; UMP biosynthesis via de novo pathway; (S)-dihydroorotate from bicarbonate: step 2/3. In terms of biological role, catalyzes the condensation of carbamoyl phosphate and aspartate to form carbamoyl aspartate and inorganic phosphate, the committed step in the de novo pyrimidine nucleotide biosynthesis pathway. This is Aspartate carbamoyltransferase catalytic subunit from Jannaschia sp. (strain CCS1).